The chain runs to 203 residues: Small ribosomal subunit protein uS7B (203 aa).

This sequence belongs to the universal ribosomal protein uS7 family. Component of the small ribosomal subunit (SSU). Mature yeast ribosomes consist of a small (40S) and a large (60S) subunit. The 40S small subunit contains 1 molecule of ribosomal RNA (18S rRNA) and at least 33 different proteins. The large 60S subunit contains 3 rRNA molecules (25S, 5.8S and 5S rRNA) and at least 46 different proteins.

The protein localises to the cytoplasm. Component of the ribosome, a large ribonucleoprotein complex responsible for the synthesis of proteins in the cell. The small ribosomal subunit (SSU) binds messenger RNAs (mRNAs) and translates the encoded message by selecting cognate aminoacyl-transfer RNA (tRNA) molecules. The large subunit (LSU) contains the ribosomal catalytic site termed the peptidyl transferase center (PTC), which catalyzes the formation of peptide bonds, thereby polymerizing the amino acids delivered by tRNAs into a polypeptide chain. The nascent polypeptides leave the ribosome through a tunnel in the LSU and interact with protein factors that function in enzymatic processing, targeting, and the membrane insertion of nascent chains at the exit of the ribosomal tunnel. In Schizosaccharomyces pombe (strain 972 / ATCC 24843) (Fission yeast), this protein is Small ribosomal subunit protein uS7B (rps502).